The following is a 158-amino-acid chain: Cyclic pyranopterin monophosphate synthase (158 aa).

Residues 74–76 and 112–113 each bind substrate; these read MCH and ME. Aspartate 127 is an active-site residue.

The protein belongs to the MoaC family. Homohexamer; trimer of dimers.

It carries out the reaction (8S)-3',8-cyclo-7,8-dihydroguanosine 5'-triphosphate = cyclic pyranopterin phosphate + diphosphate. Its pathway is cofactor biosynthesis; molybdopterin biosynthesis. Its function is as follows. Catalyzes the conversion of (8S)-3',8-cyclo-7,8-dihydroguanosine 5'-triphosphate to cyclic pyranopterin monophosphate (cPMP). In Helicobacter pylori (strain P12), this protein is Cyclic pyranopterin monophosphate synthase.